A 315-amino-acid chain; its full sequence is Methionyl-tRNA formyltransferase (315 aa).

113 to 116 serves as a coordination point for (6S)-5,6,7,8-tetrahydrofolate; sequence SLLP.

It belongs to the Fmt family.

It carries out the reaction L-methionyl-tRNA(fMet) + (6R)-10-formyltetrahydrofolate = N-formyl-L-methionyl-tRNA(fMet) + (6S)-5,6,7,8-tetrahydrofolate + H(+). Attaches a formyl group to the free amino group of methionyl-tRNA(fMet). The formyl group appears to play a dual role in the initiator identity of N-formylmethionyl-tRNA by promoting its recognition by IF2 and preventing the misappropriation of this tRNA by the elongation apparatus. The sequence is that of Methionyl-tRNA formyltransferase from Pseudoalteromonas atlantica (strain T6c / ATCC BAA-1087).